Here is a 961-residue protein sequence, read N- to C-terminus: Glycine dehydrogenase (decarboxylating) (961 aa).

N6-(pyridoxal phosphate)lysine is present on K709.

The protein belongs to the GcvP family. As to quaternary structure, the glycine cleavage system is composed of four proteins: P, T, L and H. Pyridoxal 5'-phosphate is required as a cofactor.

It carries out the reaction N(6)-[(R)-lipoyl]-L-lysyl-[glycine-cleavage complex H protein] + glycine + H(+) = N(6)-[(R)-S(8)-aminomethyldihydrolipoyl]-L-lysyl-[glycine-cleavage complex H protein] + CO2. Its function is as follows. The glycine cleavage system catalyzes the degradation of glycine. The P protein binds the alpha-amino group of glycine through its pyridoxal phosphate cofactor; CO(2) is released and the remaining methylamine moiety is then transferred to the lipoamide cofactor of the H protein. The chain is Glycine dehydrogenase (decarboxylating) from Teredinibacter turnerae (strain ATCC 39867 / T7901).